The chain runs to 287 residues: 4-hydroxybenzoate octaprenyltransferase (287 aa).

6 consecutive transmembrane segments (helical) span residues 41 to 61, 89 to 109, 133 to 153, 158 to 178, 202 to 224, and 266 to 286; these read WPLL…GCAM, WEAV…ILPL, FFAI…PMAF, DTVP…SVAY, FGRF…YVWI, and HNNW…LLAG.

It belongs to the UbiA prenyltransferase family. Requires Mg(2+) as cofactor.

It is found in the cell inner membrane. The enzyme catalyses all-trans-octaprenyl diphosphate + 4-hydroxybenzoate = 4-hydroxy-3-(all-trans-octaprenyl)benzoate + diphosphate. It participates in cofactor biosynthesis; ubiquinone biosynthesis. Functionally, catalyzes the prenylation of para-hydroxybenzoate (PHB) with an all-trans polyprenyl group. Mediates the second step in the final reaction sequence of ubiquinone-8 (UQ-8) biosynthesis, which is the condensation of the polyisoprenoid side chain with PHB, generating the first membrane-bound Q intermediate 3-octaprenyl-4-hydroxybenzoate. This chain is 4-hydroxybenzoate octaprenyltransferase, found in Burkholderia cenocepacia (strain HI2424).